The following is a 339-amino-acid chain: Mycothiol acetyltransferase (339 aa).

N-acetyltransferase domains lie at Tyr8 to Thr174 and Leu176 to Asn339. Residue Glu39 participates in 1D-myo-inositol 2-(L-cysteinylamino)-2-deoxy-alpha-D-glucopyranoside binding. Leu85–Val87 lines the acetyl-CoA pocket. Glu207, Lys254, and Glu270 together coordinate 1D-myo-inositol 2-(L-cysteinylamino)-2-deoxy-alpha-D-glucopyranoside. Val274–Leu276 is an acetyl-CoA binding site. Tyr308 lines the 1D-myo-inositol 2-(L-cysteinylamino)-2-deoxy-alpha-D-glucopyranoside pocket.

It belongs to the acetyltransferase family. MshD subfamily. As to quaternary structure, monomer.

It carries out the reaction 1D-myo-inositol 2-(L-cysteinylamino)-2-deoxy-alpha-D-glucopyranoside + acetyl-CoA = mycothiol + CoA + H(+). Functionally, catalyzes the transfer of acetyl from acetyl-CoA to desacetylmycothiol (Cys-GlcN-Ins) to form mycothiol. The protein is Mycothiol acetyltransferase of Corynebacterium urealyticum (strain ATCC 43042 / DSM 7109).